A 186-amino-acid polypeptide reads, in one-letter code: Potassium-transporting ATPase KdpC subunit (186 aa).

The chain crosses the membrane as a helical span at residues 9–29 (AAVVLFGGCLLVLGLLYPLAM).

The protein belongs to the KdpC family. As to quaternary structure, the system is composed of three essential subunits: KdpA, KdpB and KdpC.

Its subcellular location is the cell membrane. Functionally, part of the high-affinity ATP-driven potassium transport (or Kdp) system, which catalyzes the hydrolysis of ATP coupled with the electrogenic transport of potassium into the cytoplasm. This subunit acts as a catalytic chaperone that increases the ATP-binding affinity of the ATP-hydrolyzing subunit KdpB by the formation of a transient KdpB/KdpC/ATP ternary complex. The protein is Potassium-transporting ATPase KdpC subunit of Methanosphaerula palustris (strain ATCC BAA-1556 / DSM 19958 / E1-9c).